The chain runs to 301 residues: TLR adapter interacting with SLC15A4 on the lysosome (301 aa).

The pLxIS motif signature appears at 290–294 (SLHIS). Phosphoserine is present on Ser294.

As to quaternary structure, interacts (via pLxIS motif) with IRF5; leading to IRF5 activation. Interacts with SLC15A4; leading to its recruitment to endolysosome. The phosphorylated pLxIS motif constitutes an IRF5-binding motif, leading to recruitment of the transcription factor IRF5 to induce type-I interferons and other cytokines. In terms of tissue distribution, highly expressed in immune cell types such as B-cells, neutrophils, dendritic cells and monocytes, the expression levels are two-three-fold higher in female cells compared to male cells (at protein level). Expressed at low levels in T-cells and NK cells.

Its subcellular location is the lysosome membrane. It is found in the endosome membrane. The protein localises to the nucleus. The protein resides in the cytoplasm. Its function is as follows. Innate immune adapter that mediates the recruitment and activation of IRF5 downstream of endolysosomal toll-like receptors TLR7, TLR8 and TLR9. Following recruitment to endolysosome by SLC15A4 downstream of TLR7, TLR8 and TLR9, specifically recruits IRF5 transcription factor via its pLxIS motif, leading to IRF5 activation and subsequent expression of type I interferons. Plays a role in the regulation of endolysosomal pH in immune cells such as B-cells, dendritic cells and monocytes. The polypeptide is TLR adapter interacting with SLC15A4 on the lysosome (Homo sapiens (Human)).